Consider the following 817-residue polypeptide: Protein-glutamine gamma-glutamyltransferase K (817 aa).

2 disordered regions span residues 1–38 and 59–105; these read MMDG…SRRG and DDWG…DGTI. Residues 1-100 are membrane anchorage region; sequence MMDGPRSDVG…VSRGSGVNAA (100 aa). Pro residues predominate over residues 17–26; that stretch reads LQPPTTPSPE. A Phosphothreonine modification is found at threonine 22. A phosphoserine mark is found at serine 24, serine 68, serine 82, serine 85, serine 92, and serine 95. Low complexity predominate over residues 71 to 84; that stretch reads RGSSSGTRRPGSRG. Active-site residues include cysteine 377, histidine 436, and aspartate 459. Ca(2+) contacts are provided by asparagine 499, aspartate 501, glutamate 548, and glutamate 553. The tract at residues 793-817 is disordered; that stretch reads GGFFSDAGGDSHLGETIPMASRGGA.

This sequence belongs to the transglutaminase superfamily. Transglutaminase family. In terms of assembly, interacts with PLAAT4. Ca(2+) is required as a cofactor. Palmitoylated. Post-translationally, the membrane anchorage region possesses a cluster of five cysteines within which fatty acid(s) may become thioester-linked. It is subject to phorbol ester-stimulated phosphorylation and is hypersensitive to proteolysis, which releases the enzyme in a soluble form. In terms of processing, tyrosine-phosphorylated.

The protein resides in the membrane. The catalysed reaction is L-glutaminyl-[protein] + L-lysyl-[protein] = [protein]-L-lysyl-N(6)-5-L-glutamyl-[protein] + NH4(+). Catalyzes the cross-linking of proteins and the conjugation of polyamines to proteins. Responsible for cross-linking epidermal proteins during formation of the stratum corneum. Involved in cell proliferation. This Homo sapiens (Human) protein is Protein-glutamine gamma-glutamyltransferase K (TGM1).